A 697-amino-acid polypeptide reads, in one-letter code: Protein arginine N-methyltransferase 7 (697 aa).

2 consecutive SAM-dependent MTase PRMT-type domains span residues 14–357 and 366–697; these read QNTW…YSLW and EQPA…EETK.

The protein belongs to the class I-like SAM-binding methyltransferase superfamily. Protein arginine N-methyltransferase family. PRMT7 subfamily.

Essential arginine methyltransferase that can both catalyze the formation of omega-N monomethylarginine (MMA) and symmetrical dimethylarginine (sDMA). Specifically mediates the symmetrical dimethylation of arginine residues in the small nuclear ribonucleoproteins SmD1 and SmD3. This is Protein arginine N-methyltransferase 7 (Art7) from Drosophila virilis (Fruit fly).